The following is a 441-amino-acid chain: Anti-sigma-I factor RsgI (441 aa).

The Cytoplasmic portion of the chain corresponds to methionine 1–serine 53. The RsgI N-terminal anti-sigma domain maps to asparagine 3–arginine 51. A helical transmembrane segment spans residues isoleucine 54–tyrosine 76. The Extracellular segment spans residues asparagine 77–glutamine 441. The segment at glutamate 213 to glutamine 441 is disordered. The segment covering serine 219–valine 230 has biased composition (polar residues). The segment covering proline 240–serine 251 has biased composition (low complexity). The span at serine 252–asparagine 281 shows a compositional bias: basic and acidic residues. Low complexity-rich tracts occupy residues glycine 282–asparagine 328, asparagine 336–asparagine 358, and asparagine 366–glycine 408. The segment covering lysine 411–glutamate 428 has biased composition (polar residues). Positions asparagine 429 to glutamine 441 are enriched in basic and acidic residues.

Interacts (via RsgI N-terminal anti-sigma domain) with SigI.

Its subcellular location is the cell membrane. Anti-sigma factor for SigI. Negatively regulates SigI activity through direct interaction. Has no direct effect on virulence gene expression. In Bacillus anthracis, this protein is Anti-sigma-I factor RsgI.